A 238-amino-acid chain; its full sequence is Uridylate kinase (238 aa).

12–15 (KLSG) is an ATP binding site. Glycine 54 serves as a coordination point for UMP. ATP-binding residues include glycine 55 and arginine 59. UMP contacts are provided by residues aspartate 74 and 135–142 (TGNPFFTT). ATP contacts are provided by threonine 162, tyrosine 168, and aspartate 171.

Belongs to the UMP kinase family. Homohexamer.

Its subcellular location is the cytoplasm. It carries out the reaction UMP + ATP = UDP + ADP. The protein operates within pyrimidine metabolism; CTP biosynthesis via de novo pathway; UDP from UMP (UMPK route): step 1/1. With respect to regulation, inhibited by UTP. Functionally, catalyzes the reversible phosphorylation of UMP to UDP. The chain is Uridylate kinase from Janthinobacterium sp. (strain Marseille) (Minibacterium massiliensis).